Reading from the N-terminus, the 179-residue chain is Large ribosomal subunit protein uL5 (179 aa).

It belongs to the universal ribosomal protein uL5 family. In terms of assembly, part of the 50S ribosomal subunit; part of the 5S rRNA/L5/L18/L25 subcomplex. Contacts the 5S rRNA and the P site tRNA. Forms a bridge to the 30S subunit in the 70S ribosome.

This is one of the proteins that bind and probably mediate the attachment of the 5S RNA into the large ribosomal subunit, where it forms part of the central protuberance. In the 70S ribosome it contacts protein S13 of the 30S subunit (bridge B1b), connecting the 2 subunits; this bridge is implicated in subunit movement. Contacts the P site tRNA; the 5S rRNA and some of its associated proteins might help stabilize positioning of ribosome-bound tRNAs. The protein is Large ribosomal subunit protein uL5 of Azotobacter vinelandii (strain DJ / ATCC BAA-1303).